The following is a 390-amino-acid chain: Heparan sulfate glucosamine 3-O-sulfotransferase 3B1 (390 aa).

A disordered region spans residues 1–25 (MGQRLSGGRSCLDVPGRFLPQPPPP). The Cytoplasmic segment spans residues 1–32 (MGQRLSGGRSCLDVPGRFLPQPPPPPPPVRRK). A helical; Signal-anchor for type II membrane protein transmembrane segment spans residues 33–53 (LALLFAMLCIWLYMFLYSCAG). Over 54–390 (SCTAAPGLLL…QMTGRDFGWD (337 aa)) the chain is Lumenal. The segment at 79 to 125 (TAPNETSPKMPFRAPPANSLAAGKDKTVGAGSQEEQSPEAPDSPSPI) is disordered. Residue asparagine 82 is glycosylated (N-linked (GlcNAc...) asparagine). 147–151 (KGGTR) lines the 3'-phosphoadenylyl sulfate pocket. Substrate is bound by residues 169–175 (EPHFFDR) and 200–203 (KTPS). 2 residues coordinate 3'-phosphoadenylyl sulfate: arginine 228 and serine 236. Asparagine 258 is a glycosylation site (N-linked (GlcNAc...) asparagine). 268 to 269 (WS) contacts substrate. Asparagine 329 carries an N-linked (GlcNAc...) asparagine glycan. Residues cysteine 336 and cysteine 348 are joined by a disulfide bond. 353–357 (KGRAH) provides a ligand contact to 3'-phosphoadenylyl sulfate.

It belongs to the sulfotransferase 1 family.

The protein resides in the golgi apparatus membrane. It carries out the reaction alpha-D-glucosaminyl-[heparan sulfate](n) + 3'-phosphoadenylyl sulfate = 3-sulfo-alpha-D-glucosaminyl-[heparan sulfate](n) + adenosine 3',5'-bisphosphate + H(+). Sulfotransferase that utilizes 3'-phospho-5'-adenylyl sulfate (PAPS) to catalyze the transfer of a sulfo group to an N-unsubstituted glucosamine linked to a 2-O-sulfo iduronic acid unit on heparan sulfate. Catalyzes the O-sulfation of glucosamine in IdoUA2S-GlcNS and also in IdoUA2S-GlcNH2. Unlike HS3ST1/3-OST-1, does not convert non-anticoagulant heparan sulfate to anticoagulant heparan sulfate. This Mus musculus (Mouse) protein is Heparan sulfate glucosamine 3-O-sulfotransferase 3B1 (Hs3st3b1).